The sequence spans 317 residues: Taste receptor type 2 member 14 (317 aa).

Topologically, residues 1 to 7 (MGDVIKS) are extracellular. The chain crosses the membrane as a helical span at residues 8–28 (IFTFVLIVEFIIGNLGNSFIA). Topologically, residues 29 to 55 (LVNCIDWVKGRKISSVDQILTALAISR) are cytoplasmic. The helical transmembrane segment at 56–76 (ISLVWLIFGSWCVSVFLPALF) threads the bilayer. The Extracellular segment spans residues 77–87 (ATEKMFRMLTN). 2 residues coordinate cholesterol: T86 and W89. A helical membrane pass occupies residues 88 to 108 (IWTVINHFSVWLATGLGTFYF). Over 109-129 (LKIANFSNSIFLYLKWRVKKV) the chain is Cytoplasmic. A helical membrane pass occupies residues 130-150 (VLVLLLVTSVFLFLNIALINI). Residues 151 to 184 (HINASINGYRRNKTCSSDSSNFTRFSSLIVLTST) are Extracellular-facing. N153, N162, and N171 each carry an N-linked (GlcNAc...) asparagine glycan. Residue V180 coordinates cholesterol. Residues 185-205 (VFIFIPFTLSLAMFLLLIFSL) traverse the membrane as a helical segment. Topologically, residues 206–232 (WKHRKKMQHXVKRSGDASTKAHRGVKS) are cytoplasmic. The chain crosses the membrane as a helical span at residues 233-253 (VITFFLLYAIFCLSFFISVWT). Over 254 to 261 (SERLEENL) the chain is Extracellular. A helical transmembrane segment spans residues 262 to 282 (IILSQVMGMAYPSCHSCVLIL). The cholesterol site is built by S265 and M268. The Cytoplasmic portion of the chain corresponds to 283 to 317 (GNKKLRQASLSVLLWLRYMFKDGEPSGHKEFRESS).

The protein belongs to the G-protein coupled receptor T2R family. Core component of the TAS2R14-GNAI1 complex, consisting of TAS2R14, GNAI1, GNB1 and GNG2; within the complex interacts with GNAI1. Core component of the TAS2R14-GNAT3 complex, consisting of TAS2R14, GNAT3, GNB1 and GNG2; within the complex interacts with GNAT3. Core component of the TAS2R14-GNAS2 complex, consisting of TAS2R14, GNAS2, GNB1 and GNG2; within the complex interacts with GNAS2.

It is found in the membrane. It carries out the reaction Ca(2+)(in) = Ca(2+)(out). The catalysed reaction is 3',5'-cyclic AMP(in) = 3',5'-cyclic AMP(out). Its activity is regulated as follows. Basal activity is enhanced by binding to bitter tastants, such as flufenamic acid and aristolochic acid. Regulated by cholesterol in a concentration-dependent manner. Gustducin-linked G-protein coupled receptor that plays a role in the perception of bitterness. The activity of this receptor stimulates GNAT3, activating the gustducin G-protein pathway. Likely plays a role in sensing the chemical composition of the gastrointestinal content and other extra-oral tissues via the inhibitory G-protein pathways. This is Taste receptor type 2 member 14 (TAS2R14) from Gorilla gorilla gorilla (Western lowland gorilla).